Reading from the N-terminus, the 244-residue chain is 7-cyano-7-deazaguanine synthase (244 aa).

17-27 (FSGGQDSTTCL) is a binding site for ATP. Zn(2+) is bound by residues C205, C220, C223, and C226.

It belongs to the QueC family. It depends on Zn(2+) as a cofactor.

It carries out the reaction 7-carboxy-7-deazaguanine + NH4(+) + ATP = 7-cyano-7-deazaguanine + ADP + phosphate + H2O + H(+). The protein operates within purine metabolism; 7-cyano-7-deazaguanine biosynthesis. Catalyzes the ATP-dependent conversion of 7-carboxy-7-deazaguanine (CDG) to 7-cyano-7-deazaguanine (preQ(0)). The chain is 7-cyano-7-deazaguanine synthase from Bordetella pertussis (strain Tohama I / ATCC BAA-589 / NCTC 13251).